Reading from the N-terminus, the 289-residue chain is MEANVTIPIWQNKPHGAARSVVRRIGTNLPLKPCPRASFETLPNISDLCLKDVPPVPTLADIAWIAADEEETYARVRSDTRPLRHTWKPSPLIVMQRNASVPNLRGSEERLLALKKPALPALSRTTELQDELSHLRSQIAKIVAADAASASLTPDFFSSGSSNVSSPLPCFGSSLHSTTSFVISDITEETEVEVPELPTVPLLCSASPECCKPEHKTTCSSSEEDDCISLSKASSFADMMGILKDFHRIKQSQDLSRSLLKEEDPAVLISEVLRRKFALKEEDISRKGN.

Thr-27 is modified (phosphothreonine). Phosphoserine is present on Ser-38. Ser-100 bears the Phosphoserine; by AMPK mark. Phosphoserine occurs at positions 107, 221, and 222. Ser-235 bears the Phosphoserine; by AMPK mark. A phosphoserine mark is found at Ser-258 and Ser-270.

This sequence belongs to the MTFR1 family. In terms of processing, phosphorylated by AMPK. Upon stress, phosphorylation at Ser-100 and Ser-235 by AMPK is sufficient to induce mitochondrial fragmentation.

The protein localises to the mitochondrion outer membrane. Its function is as follows. Mitochondrial protein required for adaptation of miochondrial dynamics to metabolic changes. Regulates mitochondrial morphology at steady state and mediates AMPK-dependent stress-induced mitochondrial fragmentation via the control of OPA1 levels. The polypeptide is Mitochondrial fission regulator 1-like (Mtfr1l) (Mus musculus (Mouse)).